We begin with the raw amino-acid sequence, 209 residues long: Guanylate kinase (209 aa).

Positions 9–188 (GIMLVISSPS…SVYQIKCIFT (180 aa)) constitute a Guanylate kinase-like domain. Residue 16–23 (SPSGGGKT) participates in ATP binding.

The protein belongs to the guanylate kinase family.

The protein resides in the cytoplasm. The catalysed reaction is GMP + ATP = GDP + ADP. Its function is as follows. Essential for recycling GMP and indirectly, cGMP. The protein is Guanylate kinase of Ehrlichia chaffeensis (strain ATCC CRL-10679 / Arkansas).